We begin with the raw amino-acid sequence, 128 residues long: MEIVNALGRRKTAVARVYVREGSGKILINQRSLESYFPSSILRYVVKQPLNKLGVSEQYDITINLKGGGYKGQSEAIRLGIARALIKINSKDKPLLRSEGFVTRDSRKVERKKPGRPKARKKFQFSKR.

The tract at residues 106-128 (SRKVERKKPGRPKARKKFQFSKR) is disordered. The span at 109–128 (VERKKPGRPKARKKFQFSKR) shows a compositional bias: basic residues.

Belongs to the universal ribosomal protein uS9 family.

The protein is Small ribosomal subunit protein uS9 of Azobacteroides pseudotrichonymphae genomovar. CFP2.